Here is a 539-residue protein sequence, read N- to C-terminus: Trigger factor (539 aa).

A PPIase FKBP-type domain is found at Gly-163–Pro-252. Composition is skewed to low complexity over residues Ser-434–Pro-447 and Ala-475–Pro-484. A disordered region spans residues Ser-434 to Glu-539. The span at Thr-509–Val-528 shows a compositional bias: polar residues.

Belongs to the FKBP-type PPIase family. Tig subfamily.

The protein localises to the cytoplasm. It carries out the reaction [protein]-peptidylproline (omega=180) = [protein]-peptidylproline (omega=0). In terms of biological role, involved in protein export. Acts as a chaperone by maintaining the newly synthesized protein in an open conformation. Functions as a peptidyl-prolyl cis-trans isomerase. This chain is Trigger factor, found in Roseiflexus sp. (strain RS-1).